Here is a 387-residue protein sequence, read N- to C-terminus: tRNA-specific 2-thiouridylase MnmA (387 aa).

Residues 6 to 13 (AMSGGVDS) and Leu-32 contribute to the ATP site. The active-site Nucleophile is Cys-101. Cys-101 and Cys-199 are oxidised to a cystine. Gly-125 is a binding site for ATP. The interaction with tRNA stretch occupies residues 148–150 (KDQ). Cys-199 acts as the Cysteine persulfide intermediate in catalysis.

The protein belongs to the MnmA/TRMU family.

Its subcellular location is the cytoplasm. It catalyses the reaction S-sulfanyl-L-cysteinyl-[protein] + uridine(34) in tRNA + AH2 + ATP = 2-thiouridine(34) in tRNA + L-cysteinyl-[protein] + A + AMP + diphosphate + H(+). Catalyzes the 2-thiolation of uridine at the wobble position (U34) of tRNA, leading to the formation of s(2)U34. The chain is tRNA-specific 2-thiouridylase MnmA from Clavibacter michiganensis subsp. michiganensis (strain NCPPB 382).